The sequence spans 631 residues: Pro-interleukin-16 (631 aa).

2 disordered regions span residues 30–269 (ENPG…FPLT) and 317–344 (PKEG…ASDT). Residues 132–144 (SSSSSSIKQRISS) show a composition bias toward low complexity. At S221 the chain carries Phosphoserine. The segment covering 322–344 (SPTSSSNEDSAANGSAETSASDT) has biased composition (polar residues). Residues 405–501 (KQLDSIHVTI…IVTRKLTAES (97 aa)) form an interaction with PPP1R12A, PPP1R12B and PPP1R12C region. PDZ domains follow at residues 411 to 496 (HVTI…VTRK) and 533 to 618 (TVTL…IRRK).

In terms of assembly, homotetramer. Pro-interleukin-16 interacts (via PDZ 2 domain) with PPP1R12A, PPP1R12B and PPP1R12C. Pro-interleukin-16 interacts with GRIN2A. Pro-interleukin-16 interacts with GABPB1. Pro-interleukin-16 interacts (via PDZ 3 domain) with HDAC3.

It localises to the secreted. The protein localises to the cytoplasm. The protein resides in the nucleus. Functionally, interleukin-16 stimulates a migratory response in CD4+ lymphocytes, monocytes, and eosinophils. Primes CD4+ T-cells for IL-2 and IL-15 responsiveness. Also induces T-lymphocyte expression of interleukin 2 receptor. Ligand for CD4. In terms of biological role, pro-interleukin-16 is involved in cell cycle progression in T-cells. Appears to be involved in transcriptional regulation of SKP2 and is probably part of a transcriptional repression complex on the core promoter of the SKP2 gene. May act as a scaffold for GABPB1 (the DNA-binding subunit the GABP transcription factor complex) and HDAC3 thus maintaining transcriptional repression and blocking cell cycle progression in resting T-cells. The protein is Pro-interleukin-16 (IL16) of Chlorocebus aethiops (Green monkey).